We begin with the raw amino-acid sequence, 291 residues long: MLVPWAPIAATSVVAAAASSYYFSNMAISNDAKTATLKGDDQWVDLKLKSSKDLSHNTKALIFELPTPDSTLGLTTASALLTKYVTPKGSNVVRPYTPVSDPDSKGEFELVVKSYPEGKMSKHIHELKEGDTLSFKGPIIKYQWQPNLHKEITLIGAGTGITPLYQLISAINKNPEDKTKVNLFYGNATEGDILLKDEIDAIAKAKPQQFNVHYFLDKPSDNWKGENGFISEEFIKGNSPAADSDNVKVFVCGPPPFYKAISGAKVSPTDQGEVDGALKNLGFNKDQVFKF.

The helical transmembrane segment at 7-23 (PIAATSVVAAAASSYYF) threads the bilayer. In terms of domain architecture, FAD-binding FR-type spans 41 to 145 (DQWVDLKLKS…KGPIIKYQWQ (105 aa)). FAD is bound at residue 148–183 (LHKEITLIGAGTGITPLYQLISAINKNPEDKTKVNL).

This sequence belongs to the flavoprotein pyridine nucleotide cytochrome reductase family. It depends on FAD as a cofactor.

It localises to the mitochondrion outer membrane. It carries out the reaction 2 Fe(III)-[cytochrome b5] + NADH = 2 Fe(II)-[cytochrome b5] + NAD(+) + H(+). Its function is as follows. May mediate the reduction of outer membrane cytochrome b5. This is NADH-cytochrome b5 reductase 2 (MCR1) from Yarrowia lipolytica (strain CLIB 122 / E 150) (Yeast).